A 303-amino-acid chain; its full sequence is AP2-like ethylene-responsive transcription factor At1g79700 (303 aa).

Positions 1-10 (MAKVSGRSKK) are enriched in basic residues. A disordered region spans residues 1–55 (MAKVSGRSKKTIVDDEISDKTASASESASIALTSKRKRKSPPRNAPLQRSSPYRG). Residues 20-32 (KTASASESASIAL) show a composition bias toward polar residues. 2 DNA-binding regions (AP2/ERF) span residues 52 to 118 (PYRG…LNFP) and 154 to 202 (KYRG…TNFD). Residues 212-259 (AADKADSDSKPIRSPSREPESSDDNKSPKSEEVIEPSTSPEVIPTRRS) are disordered. Over residues 214–243 (DKADSDSKPIRSPSREPESSDDNKSPKSEE) the composition is skewed to basic and acidic residues.

Belongs to the AP2/ERF transcription factor family. AP2 subfamily.

The protein localises to the nucleus. Its function is as follows. Probably acts as a transcriptional activator. Binds to the GCC-box pathogenesis-related promoter element. May be involved in the regulation of gene expression by stress factors and by components of stress signal transduction pathways. This Arabidopsis thaliana (Mouse-ear cress) protein is AP2-like ethylene-responsive transcription factor At1g79700.